A 287-amino-acid polypeptide reads, in one-letter code: Ribosomal RNA small subunit methyltransferase I (287 aa).

The protein belongs to the methyltransferase superfamily. RsmI family.

The protein localises to the cytoplasm. The enzyme catalyses cytidine(1402) in 16S rRNA + S-adenosyl-L-methionine = 2'-O-methylcytidine(1402) in 16S rRNA + S-adenosyl-L-homocysteine + H(+). In terms of biological role, catalyzes the 2'-O-methylation of the ribose of cytidine 1402 (C1402) in 16S rRNA. The polypeptide is Ribosomal RNA small subunit methyltransferase I (Streptococcus pyogenes serotype M18 (strain MGAS8232)).